The primary structure comprises 374 residues: UPF0496 protein At3g28270 (374 aa).

The stretch at 171–210 forms a coiled coil; the sequence is KVLTTQFERIKKQQESLLEEVSETRKKIQDEISNLEKKTL. The next 2 helical transmembrane spans lie at 214–234 and 235–255; these read VVFGAAFAIVAVASIALIATG and VGAAAGFGALAAPLLAAGWAG. Residues 256 to 321 are a coiled coil; that stretch reads VYTTLDKKKD…MLKLVDNAID (66 aa).

The protein belongs to the UPF0496 family.

It is found in the membrane. In Arabidopsis thaliana (Mouse-ear cress), this protein is UPF0496 protein At3g28270.